Consider the following 359-residue polypeptide: Doublesex- and mab-3-related transcription factor B1 (359 aa).

A DNA-binding region (DM) is located at residues 7-54 (CSRCRNHGYLVPVKGHTGKCRWKQCICDKCYLITERQKIMAAQKVLRT). 2 disordered regions span residues 111–149 (PPQA…RDRS) and 262–359 (SGLV…EQSN). Composition is skewed to pro residues over residues 277–299 (CSPP…PQPQ) and 315–325 (LPPPPPPPSPP). The span at 348–359 (EPSQDSPQEQSN) shows a compositional bias: polar residues.

Belongs to the DMRT family. Brain.

The protein localises to the nucleus. The chain is Doublesex- and mab-3-related transcription factor B1 (Dmrtb1) from Mus musculus (Mouse).